The following is a 251-amino-acid chain: MNDAAPMSPAEFEQALRAKGAFYHIHHPYHVAMYEGRATREQIQGWVANRFYYQVNIPMKDAAILANCPDREVRREWVQRLLDHDGAPGEDGGIEAWLRLGQAVGLDPDQLRSQELVLPGVRFAVDAYVNFARRASWQEAASSSLTELFAPQIHQSRLDSWPQHYPWIDPAGYEYFRTRLGQARRDVEHGLAITLAHYTTREGQARMLEILQFKLDILWSMLDAMSMAYELNRPPYHSVTSERVWHKGIAL.

This sequence belongs to the PqqC family.

The catalysed reaction is 6-(2-amino-2-carboxyethyl)-7,8-dioxo-1,2,3,4,7,8-hexahydroquinoline-2,4-dicarboxylate + 3 O2 = pyrroloquinoline quinone + 2 H2O2 + 2 H2O + H(+). The protein operates within cofactor biosynthesis; pyrroloquinoline quinone biosynthesis. Its function is as follows. Ring cyclization and eight-electron oxidation of 3a-(2-amino-2-carboxyethyl)-4,5-dioxo-4,5,6,7,8,9-hexahydroquinoline-7,9-dicarboxylic-acid to PQQ. This chain is Pyrroloquinoline-quinone synthase, found in Pseudomonas entomophila (strain L48).